A 248-amino-acid chain; its full sequence is Phosphatidylserine decarboxylase proenzyme (248 aa).

Catalysis depends on S206, which acts as the Schiff-base intermediate with substrate; via pyruvic acid. A Pyruvic acid (Ser); by autocatalysis modification is found at S206.

This sequence belongs to the phosphatidylserine decarboxylase family. PSD-A subfamily. Heterodimer of a large membrane-associated beta subunit and a small pyruvoyl-containing alpha subunit. The cofactor is pyruvate. In terms of processing, is synthesized initially as an inactive proenzyme. Formation of the active enzyme involves a self-maturation process in which the active site pyruvoyl group is generated from an internal serine residue via an autocatalytic post-translational modification. Two non-identical subunits are generated from the proenzyme in this reaction, and the pyruvate is formed at the N-terminus of the alpha chain, which is derived from the carboxyl end of the proenzyme. The post-translation cleavage follows an unusual pathway, termed non-hydrolytic serinolysis, in which the side chain hydroxyl group of the serine supplies its oxygen atom to form the C-terminus of the beta chain, while the remainder of the serine residue undergoes an oxidative deamination to produce ammonia and the pyruvoyl prosthetic group on the alpha chain.

It localises to the cell membrane. It catalyses the reaction a 1,2-diacyl-sn-glycero-3-phospho-L-serine + H(+) = a 1,2-diacyl-sn-glycero-3-phosphoethanolamine + CO2. It functions in the pathway phospholipid metabolism; phosphatidylethanolamine biosynthesis; phosphatidylethanolamine from CDP-diacylglycerol: step 2/2. Its function is as follows. Catalyzes the formation of phosphatidylethanolamine (PtdEtn) from phosphatidylserine (PtdSer). The sequence is that of Phosphatidylserine decarboxylase proenzyme from Nitrobacter hamburgensis (strain DSM 10229 / NCIMB 13809 / X14).